The sequence spans 148 residues: Large ribosomal subunit protein bL9 (148 aa).

It belongs to the bacterial ribosomal protein bL9 family.

Binds to the 23S rRNA. The chain is Large ribosomal subunit protein bL9 from Pseudomonas putida (strain W619).